The following is an 828-amino-acid chain: Beta-galactosidase (828 aa).

The first 20 residues, 1–20 (MKMKQFNLLSLFLILITSFG), serve as a signal peptide directing secretion. Residues asparagine 23 and asparagine 153 are each glycosylated (N-linked (GlcNAc...) asparagine). The Proton donor role is filled by glutamate 183. Glutamate 252 serves as the catalytic Nucleophile. Asparagine 253, asparagine 350, asparagine 379, asparagine 492, asparagine 667, asparagine 799, and asparagine 803 each carry an N-linked (GlcNAc...) asparagine glycan. Positions 742 to 828 (AHEHNKVELS…PKRLFVEVEC (87 aa)) constitute an SUEL-type lectin domain.

Belongs to the glycosyl hydrolase 35 family.

Its subcellular location is the secreted. It is found in the extracellular space. It localises to the apoplast. The catalysed reaction is Hydrolysis of terminal non-reducing beta-D-galactose residues in beta-D-galactosides.. The protein is Beta-galactosidase of Brassica oleracea (Wild cabbage).